A 167-amino-acid polypeptide reads, in one-letter code: Gametocyte-specific factor 1 homolog (167 aa).

CHHC U11-48K-type zinc fingers lie at residues 1–28 and 34–61; these read MVYC…RVIY and LMVC…EDRN. Zn(2+) is bound by residues C4, H10, H20, C24, C37, H43, H53, and C57. A compositionally biased stretch (basic and acidic residues) spans 128–161; it reads EKRRHFGEDYEEEKKPRKAKARADLRPTPYEHRR. The tract at residues 128 to 167 is disordered; it reads EKRRHFGEDYEEEKKPRKAKARADLRPTPYEHRRPYSRRQ.

Belongs to the UPF0224 (FAM112) family. Interacts with piwi.

It localises to the nucleus. Functionally, acts via the piwi-interacting RNA (piRNA) pathway which mediates the repression of transposable elements during meiosis by forming complexes composed of piRNAs and piwi proteins and governs the methylation and subsequent repression of transposons. Required for repression of transposons and neighboring genes in ovarian somatic and germline cells. The chain is Gametocyte-specific factor 1 homolog from Drosophila melanogaster (Fruit fly).